The chain runs to 248 residues: ATP synthase subunit a, chloroplastic (248 aa).

A run of 5 helical transmembrane segments spans residues 38–58, 96–116, 135–155, 200–220, and 221–241; these read QVLITSWIVIAVLLGSATIAV, VPFIGTMFLFIFVSNWSGALL, INTTVALALLTSVAYFYAGLA, LVVAVLVSPVPLVVPIPVMFL, and GLFTSGIQALIFATLAAAYIG.

It belongs to the ATPase A chain family. In terms of assembly, F-type ATPases have 2 components, CF(1) - the catalytic core - and CF(0) - the membrane proton channel. CF(1) has five subunits: alpha(3), beta(3), gamma(1), delta(1), epsilon(1). CF(0) has four main subunits: a, b, b' and c.

It localises to the plastid. Its subcellular location is the chloroplast thylakoid membrane. Its function is as follows. Key component of the proton channel; it plays a direct role in the translocation of protons across the membrane. The sequence is that of ATP synthase subunit a, chloroplastic from Pinus koraiensis (Korean pine).